The chain runs to 460 residues: Ribulose bisphosphate carboxylase (460 aa).

N112 serves as a coordination point for substrate. K167 serves as the catalytic Proton acceptor. Residue K169 participates in substrate binding. 3 residues coordinate Mg(2+): K192, D194, and E195. Position 192 is an N6-carboxylysine (K192). H288 acts as the Proton acceptor in catalysis. Substrate-binding residues include R289, H322, and S369.

Belongs to the RuBisCO large chain family. Type II subfamily. Homodimer. It depends on Mg(2+) as a cofactor.

It catalyses the reaction 2 (2R)-3-phosphoglycerate + 2 H(+) = D-ribulose 1,5-bisphosphate + CO2 + H2O. The catalysed reaction is D-ribulose 1,5-bisphosphate + O2 = 2-phosphoglycolate + (2R)-3-phosphoglycerate + 2 H(+). RuBisCO catalyzes two reactions: the carboxylation of D-ribulose 1,5-bisphosphate, the primary event in carbon dioxide fixation, as well as the oxidative fragmentation of the pentose substrate. Both reactions occur simultaneously and in competition at the same active site. This Rhodopseudomonas palustris (strain BisA53) protein is Ribulose bisphosphate carboxylase.